A 365-amino-acid chain; its full sequence is Phospho-N-acetylmuramoyl-pentapeptide-transferase (365 aa).

10 helical membrane passes run 22-42 (YISVRIIMISITSLLITLALG), 74-94 (TMGGVLILSSVIISCLLWGDL), 95-115 (TSIYLWILILVVIFFGAIGFF), 133-153 (YKFALQSIFSIVLAIVLFYLL), 168-188 (SLYIPMGIVIFVVLAFFIING), 201-221 (GLAIVPVVLVAAGLGIYAYIE), 240-260 (LAEVAVFCAAVCGSGLAFLWF), 267-287 (VFMGDVGSLTLGAVLGVIAVM), 292-312 (LIFFIMGLLFVVEALSVMLQV), and 342-362 (KVVIRFWIISLILFLIGLAAI).

The protein belongs to the glycosyltransferase 4 family. MraY subfamily. Mg(2+) is required as a cofactor.

Its subcellular location is the cell inner membrane. The enzyme catalyses UDP-N-acetyl-alpha-D-muramoyl-L-alanyl-gamma-D-glutamyl-meso-2,6-diaminopimeloyl-D-alanyl-D-alanine + di-trans,octa-cis-undecaprenyl phosphate = di-trans,octa-cis-undecaprenyl diphospho-N-acetyl-alpha-D-muramoyl-L-alanyl-D-glutamyl-meso-2,6-diaminopimeloyl-D-alanyl-D-alanine + UMP. It participates in cell wall biogenesis; peptidoglycan biosynthesis. In terms of biological role, catalyzes the initial step of the lipid cycle reactions in the biosynthesis of the cell wall peptidoglycan: transfers peptidoglycan precursor phospho-MurNAc-pentapeptide from UDP-MurNAc-pentapeptide onto the lipid carrier undecaprenyl phosphate, yielding undecaprenyl-pyrophosphoryl-MurNAc-pentapeptide, known as lipid I. The sequence is that of Phospho-N-acetylmuramoyl-pentapeptide-transferase from Francisella tularensis subsp. tularensis (strain WY96-3418).